A 365-amino-acid chain; its full sequence is Chorismate synthase (365 aa).

Residues Arg48 and Arg54 each coordinate NADP(+). Residues 125-127, 237-238, Gly277, 292-296, and Arg318 each bind FMN; these read RSS, NA, and KPTSS.

This sequence belongs to the chorismate synthase family. In terms of assembly, homotetramer. FMNH2 serves as cofactor.

It carries out the reaction 5-O-(1-carboxyvinyl)-3-phosphoshikimate = chorismate + phosphate. Its pathway is metabolic intermediate biosynthesis; chorismate biosynthesis; chorismate from D-erythrose 4-phosphate and phosphoenolpyruvate: step 7/7. In terms of biological role, catalyzes the anti-1,4-elimination of the C-3 phosphate and the C-6 proR hydrogen from 5-enolpyruvylshikimate-3-phosphate (EPSP) to yield chorismate, which is the branch point compound that serves as the starting substrate for the three terminal pathways of aromatic amino acid biosynthesis. This reaction introduces a second double bond into the aromatic ring system. The sequence is that of Chorismate synthase from Paracidovorax citrulli (strain AAC00-1) (Acidovorax citrulli).